We begin with the raw amino-acid sequence, 178 residues long: Large ribosomal subunit protein uL6 (178 aa).

The protein belongs to the universal ribosomal protein uL6 family. As to quaternary structure, part of the 50S ribosomal subunit.

Its function is as follows. This protein binds to the 23S rRNA, and is important in its secondary structure. It is located near the subunit interface in the base of the L7/L12 stalk, and near the tRNA binding site of the peptidyltransferase center. In Limosilactobacillus fermentum (strain NBRC 3956 / LMG 18251) (Lactobacillus fermentum), this protein is Large ribosomal subunit protein uL6.